We begin with the raw amino-acid sequence, 214 residues long: MINRTSIIKQPDKISSFCDVYKLQKKYQDALISGKSNIDFIWLGEHQLCYTIGRGSNMGNLLFSLDEQDVFKIDRGGEVTCHMPGQLVTYLVLDLHNFNKDLNWYLRKIEKIIIKVLSSFNIDSSTKDGFTGVWTGERKIASIGIGCKRWVTIHGFSINVNCKLENFDKIVPCGIQGCQMANMSDYKKNLDIKEVKIIVKKIIQEEFYFNFISE.

A BPL/LPL catalytic domain is found at 35–211 (KSNIDFIWLG…IIQEEFYFNF (177 aa)). Residues 75–82 (RGGEVTCH), 142–144 (SIG), and 155–157 (GFS) each bind substrate. The active-site Acyl-thioester intermediate is the Cys173.

This sequence belongs to the LipB family.

It is found in the cytoplasm. It catalyses the reaction octanoyl-[ACP] + L-lysyl-[protein] = N(6)-octanoyl-L-lysyl-[protein] + holo-[ACP] + H(+). The protein operates within protein modification; protein lipoylation via endogenous pathway; protein N(6)-(lipoyl)lysine from octanoyl-[acyl-carrier-protein]: step 1/2. Catalyzes the transfer of endogenously produced octanoic acid from octanoyl-acyl-carrier-protein onto the lipoyl domains of lipoate-dependent enzymes. Lipoyl-ACP can also act as a substrate although octanoyl-ACP is likely to be the physiological substrate. The protein is Octanoyltransferase of Prochlorococcus marinus (strain MIT 9515).